The sequence spans 177 residues: Large ribosomal subunit protein uL6 (177 aa).

Residues Arg152 to Arg171 are compositionally biased toward basic and acidic residues. Positions Arg152–Lys177 are disordered.

It belongs to the universal ribosomal protein uL6 family. In terms of assembly, part of the 50S ribosomal subunit.

This protein binds to the 23S rRNA, and is important in its secondary structure. It is located near the subunit interface in the base of the L7/L12 stalk, and near the tRNA binding site of the peptidyltransferase center. The chain is Large ribosomal subunit protein uL6 from Shewanella putrefaciens (strain CN-32 / ATCC BAA-453).